A 464-amino-acid polypeptide reads, in one-letter code: 3-isopropylmalate dehydratase large subunit (464 aa).

Positions 337, 397, and 400 each coordinate [4Fe-4S] cluster.

The protein belongs to the aconitase/IPM isomerase family. LeuC type 1 subfamily. As to quaternary structure, heterodimer of LeuC and LeuD. [4Fe-4S] cluster serves as cofactor.

The catalysed reaction is (2R,3S)-3-isopropylmalate = (2S)-2-isopropylmalate. The protein operates within amino-acid biosynthesis; L-leucine biosynthesis; L-leucine from 3-methyl-2-oxobutanoate: step 2/4. In terms of biological role, catalyzes the isomerization between 2-isopropylmalate and 3-isopropylmalate, via the formation of 2-isopropylmaleate. The sequence is that of 3-isopropylmalate dehydratase large subunit from Bacillus cereus (strain ZK / E33L).